Reading from the N-terminus, the 53-residue chain is Serine rich endogenous peptide 3 (53 aa).

Positions 1–26 (MTKKGPLNLRLLLLLLVVLLPSCSNC) are cleaved as a signal peptide. Positions 37-53 (SSEWRRKMITVWSKSSY) match the SCOOP motif motif. The SxS motif essential for MIK2 binding signature appears at 49–51 (SKS).

This sequence belongs to the serine rich endogenous peptide (SCOOP) phytocytokine family. Interacts with MIK2 (via extracellular leucine-rich repeat domain); this interaction triggers the formation of complex between MIK2 and the BAK1/SERK3 and SERK4 coreceptors, and subsequent BAK1 activation by phosphorylation.

Its subcellular location is the cell membrane. It is found in the secreted. It localises to the extracellular space. The protein resides in the apoplast. Functionally, brassicaceae-specific phytocytokine (plant endogenous peptide released into the apoplast) perceived by MIK2 in a BAK1/SERK3 and SERK4 coreceptors-dependent manner, that modulates various physiological and antimicrobial processes including growth prevention and reactive oxygen species (ROS) response regulation. This Arabidopsis thaliana (Mouse-ear cress) protein is Serine rich endogenous peptide 3.